The chain runs to 221 residues: Lipoprotein-releasing system ATP-binding protein LolD (221 aa).

Residues 6 to 220 form the ABC transporter domain; that stretch reads LILKKISKHY…YNLKNGLLNI (215 aa). An ATP-binding site is contributed by 42–49; it reads GSSGSGKS.

The protein belongs to the ABC transporter superfamily. Lipoprotein translocase (TC 3.A.1.125) family. As to quaternary structure, the complex is composed of two ATP-binding proteins (LolD) and two transmembrane proteins (LolC and LolE).

It is found in the cell inner membrane. Part of the ABC transporter complex LolCDE involved in the translocation of mature outer membrane-directed lipoproteins, from the inner membrane to the periplasmic chaperone, LolA. Responsible for the formation of the LolA-lipoprotein complex in an ATP-dependent manner. This Rickettsia typhi (strain ATCC VR-144 / Wilmington) protein is Lipoprotein-releasing system ATP-binding protein LolD.